The chain runs to 360 residues: tRNA N6-adenosine threonylcarbamoyltransferase (360 aa).

The Fe cation site is built by His115 and His119. Substrate-binding positions include 137–141 (LVSGG), Asp170, Gly183, and Asn283. Asp311 is a binding site for Fe cation.

Belongs to the KAE1 / TsaD family. The cofactor is Fe(2+).

It localises to the cytoplasm. It carries out the reaction L-threonylcarbamoyladenylate + adenosine(37) in tRNA = N(6)-L-threonylcarbamoyladenosine(37) in tRNA + AMP + H(+). Required for the formation of a threonylcarbamoyl group on adenosine at position 37 (t(6)A37) in tRNAs that read codons beginning with adenine. Is involved in the transfer of the threonylcarbamoyl moiety of threonylcarbamoyl-AMP (TC-AMP) to the N6 group of A37, together with TsaE and TsaB. TsaD likely plays a direct catalytic role in this reaction. In Rhizobium meliloti (strain 1021) (Ensifer meliloti), this protein is tRNA N6-adenosine threonylcarbamoyltransferase.